The sequence spans 187 residues: Elongation factor P (187 aa).

Belongs to the elongation factor P family.

It is found in the cytoplasm. It participates in protein biosynthesis; polypeptide chain elongation. Its function is as follows. Involved in peptide bond synthesis. Stimulates efficient translation and peptide-bond synthesis on native or reconstituted 70S ribosomes in vitro. Probably functions indirectly by altering the affinity of the ribosome for aminoacyl-tRNA, thus increasing their reactivity as acceptors for peptidyl transferase. The sequence is that of Elongation factor P from Ruegeria sp. (strain TM1040) (Silicibacter sp.).